A 227-amino-acid polypeptide reads, in one-letter code: DnaJ homolog subfamily B member 8 (227 aa).

Residues 3–69 (NYYEVLGVQS…KKRSVYDRAG (67 aa)) enclose the J domain.

As to quaternary structure, interacts with histone deacetylases HDAC4, HDAC6, and SIRT2, HDAC activity is required for antiaggregation.

In terms of biological role, efficient suppressor of aggregation and toxicity of disease-associated polyglutamine proteins. The sequence is that of DnaJ homolog subfamily B member 8 (Dnajb8) from Mus musculus (Mouse).